A 332-amino-acid polypeptide reads, in one-letter code: tRNA-dihydrouridine(20/20a) synthase (332 aa).

Residues 22 to 24 (PMM) and Q75 each bind FMN. The active-site Proton donor is C105. Residues K144, H177, 217-219 (NGG), and 239-240 (GR) contribute to the FMN site.

The protein belongs to the Dus family. DusA subfamily. The cofactor is FMN.

It carries out the reaction 5,6-dihydrouridine(20) in tRNA + NADP(+) = uridine(20) in tRNA + NADPH + H(+). The catalysed reaction is 5,6-dihydrouridine(20) in tRNA + NAD(+) = uridine(20) in tRNA + NADH + H(+). It catalyses the reaction 5,6-dihydrouridine(20a) in tRNA + NADP(+) = uridine(20a) in tRNA + NADPH + H(+). The enzyme catalyses 5,6-dihydrouridine(20a) in tRNA + NAD(+) = uridine(20a) in tRNA + NADH + H(+). Its function is as follows. Catalyzes the synthesis of 5,6-dihydrouridine (D), a modified base found in the D-loop of most tRNAs, via the reduction of the C5-C6 double bond in target uridines. Specifically modifies U20 and U20a in tRNAs. In Xylella fastidiosa (strain Temecula1 / ATCC 700964), this protein is tRNA-dihydrouridine(20/20a) synthase.